Here is a 353-residue protein sequence, read N- to C-terminus: Uroporphyrinogen decarboxylase (353 aa).

Residues 35–39 (RQAGR), F54, D84, Y160, S215, and H329 each bind substrate.

Belongs to the uroporphyrinogen decarboxylase family. As to quaternary structure, homodimer.

Its subcellular location is the cytoplasm. It catalyses the reaction uroporphyrinogen III + 4 H(+) = coproporphyrinogen III + 4 CO2. The protein operates within porphyrin-containing compound metabolism; protoporphyrin-IX biosynthesis; coproporphyrinogen-III from 5-aminolevulinate: step 4/4. Its function is as follows. Catalyzes the decarboxylation of four acetate groups of uroporphyrinogen-III to yield coproporphyrinogen-III. The polypeptide is Uroporphyrinogen decarboxylase (Staphylococcus epidermidis (strain ATCC 12228 / FDA PCI 1200)).